Reading from the N-terminus, the 328-residue chain is DNA-directed RNA polymerase subunit alpha (328 aa).

Residues 1 to 235 (MQGSVTEFLK…EQLDAFVDLR (235 aa)) are alpha N-terminal domain (alpha-NTD). The segment at 249-328 (FDPILLRPVD…ENWPPASLAE (80 aa)) is alpha C-terminal domain (alpha-CTD).

It belongs to the RNA polymerase alpha chain family. As to quaternary structure, homodimer. The RNAP catalytic core consists of 2 alpha, 1 beta, 1 beta' and 1 omega subunit. When a sigma factor is associated with the core the holoenzyme is formed, which can initiate transcription.

The enzyme catalyses RNA(n) + a ribonucleoside 5'-triphosphate = RNA(n+1) + diphosphate. Functionally, DNA-dependent RNA polymerase catalyzes the transcription of DNA into RNA using the four ribonucleoside triphosphates as substrates. The polypeptide is DNA-directed RNA polymerase subunit alpha (Pseudoalteromonas translucida (strain TAC 125)).